A 332-amino-acid polypeptide reads, in one-letter code: L-lactate dehydrogenase A chain (332 aa).

Residues 29 to 57 (GMVG…MEDK) and Arg-99 each bind NAD(+). The substrate site is built by Arg-106, Asn-138, and Arg-169. Asn-138 lines the NAD(+) pocket. The active-site Proton acceptor is the His-193. Residue Thr-248 coordinates substrate.

The protein belongs to the LDH/MDH superfamily. LDH family. Homotetramer.

It localises to the cytoplasm. The catalysed reaction is (S)-lactate + NAD(+) = pyruvate + NADH + H(+). It functions in the pathway fermentation; pyruvate fermentation to lactate; (S)-lactate from pyruvate: step 1/1. Interconverts simultaneously and stereospecifically pyruvate and lactate with concomitant interconversion of NADH and NAD(+). This chain is L-lactate dehydrogenase A chain (ldha), found in Sphyraena idiastes (Pelican barracuda).